Here is a 147-residue protein sequence, read N- to C-terminus: MKLDNLAPQPGAKKRKRRVGRGIAAGQGASCGFGMRGQKSRSGRPTRPGFEGGQMPLYRRVPKLKHFPLINRKFYTVVNVGALAGLAAGTEVTLESLMAVGIVTQNDGPLKILGDGELSVSLSVSAAAFTATAQQKIEAAGGSIALV.

Residues Met1 to Met55 are disordered. Gly residues predominate over residues Ile23–Met35.

This sequence belongs to the universal ribosomal protein uL15 family. In terms of assembly, part of the 50S ribosomal subunit.

Binds to the 23S rRNA. The sequence is that of Large ribosomal subunit protein uL15 from Synechococcus elongatus (strain ATCC 33912 / PCC 7942 / FACHB-805) (Anacystis nidulans R2).